We begin with the raw amino-acid sequence, 107 residues long: Phosphoribosyl-ATP pyrophosphatase (107 aa).

It belongs to the PRA-PH family.

Its subcellular location is the cytoplasm. It carries out the reaction 1-(5-phospho-beta-D-ribosyl)-ATP + H2O = 1-(5-phospho-beta-D-ribosyl)-5'-AMP + diphosphate + H(+). It functions in the pathway amino-acid biosynthesis; L-histidine biosynthesis; L-histidine from 5-phospho-alpha-D-ribose 1-diphosphate: step 2/9. The polypeptide is Phosphoribosyl-ATP pyrophosphatase (Bacillus thuringiensis (strain Al Hakam)).